The following is a 424-amino-acid chain: Neurotensin receptor type 1 (424 aa).

Residues 1–23 (MHLNSSVPQGTPGEPDAQPFSGP) form a disordered region. The Extracellular portion of the chain corresponds to 1 to 68 (MHLNSSVPQG…TDIYSKVLVT (68 aa)). N-linked (GlcNAc...) asparagine glycosylation is found at asparagine 4, asparagine 38, and asparagine 42. The chain crosses the membrane as a helical span at residues 69–89 (AIYLALFVVGTVGNSVTAFTL). Residues 90–103 (ARKKSLQSLQSTVH) lie on the Cytoplasmic side of the membrane. The helical transmembrane segment at 104–123 (YHLGSLALSDLLILLLAMPV) threads the bilayer. Topologically, residues 124–143 (ELYNFIWVHHPWAFGDAGCR) are extracellular. A disulfide bridge connects residues cysteine 142 and cysteine 225. Residues 144-165 (GYYFLRDACTYATALNVASLSV) traverse the membrane as a helical segment. At 166–185 (ERYLAICHPFKAKTLMSRSR) the chain is on the cytoplasmic side. A helical transmembrane segment spans residues 186-206 (TKKFISAIWLASALLAIPMLF). Residues 207 to 235 (TMGLQNRSGDGTHPGGLVCTPIVDTATVK) are Extracellular-facing. A helical membrane pass occupies residues 236-260 (VVIQVNTFMSFLFPMLVISILNTVI). Residues 261–308 (ANKLTVMVHQAAEQGRVCTVGTHNGLEHSTFNMTIEPGRVQALRHGVL) are Cytoplasmic-facing. Residues 309 to 330 (VLRAVVIAFVVCWLPYHVRRLM) traverse the membrane as a helical segment. Residues 326 to 349 (VRRLMFCYISDEQWTTFLFDFYHY) form a neurotensin binding region. At 331 to 348 (FCYISDEQWTTFLFDFYH) the chain is on the extracellular side. A helical transmembrane segment spans residues 349–369 (YFYMLTNALFYVSSAINPILY). At 370–424 (NLVSANFRQVFLSTLACLCPGWRHRRKKRPTFSRKPNSMSSNHAFSTSATRETLY) the chain is on the cytoplasmic side. S-palmitoyl cysteine attachment occurs at residues cysteine 386 and cysteine 388. Residues 397 to 424 (KRPTFSRKPNSMSSNHAFSTSATRETLY) form a disordered region. Polar residues predominate over residues 403–424 (RKPNSMSSNHAFSTSATRETLY).

The protein belongs to the G-protein coupled receptor 1 family. Neurotensin receptor subfamily. NTSR1 sub-subfamily. As to quaternary structure, interacts (palmitoylated form) with GNA11. N-glycosylated. In terms of processing, palmitoylated; this is required for normal localization at membrane rafts and normal GNA11-mediated activation of down-stream signaling cascades. The palmitoylation level increases in response to neurotensin treatment. Detected in brain and small intestine.

Its subcellular location is the cell membrane. It localises to the membrane raft. Functionally, G-protein coupled receptor for the tridecapeptide neurotensin (NTS). Signaling is effected via G proteins that activate a phosphatidylinositol-calcium second messenger system. Signaling leads to the activation of downstream MAP kinases and protects cells against apoptosis. This Rattus norvegicus (Rat) protein is Neurotensin receptor type 1 (Ntsr1).